The primary structure comprises 105 residues: uncharacterized protein (105 aa).

This is an uncharacterized protein from Homo sapiens (Human).